We begin with the raw amino-acid sequence, 168 residues long: Ribosome maturation factor RimM (168 aa).

The PRC barrel domain occupies 95 to 168; it reads KEGDYYWTDL…IIVVEWDADF (74 aa).

This sequence belongs to the RimM family. Binds ribosomal protein uS19.

It is found in the cytoplasm. In terms of biological role, an accessory protein needed during the final step in the assembly of 30S ribosomal subunit, possibly for assembly of the head region. Essential for efficient processing of 16S rRNA. May be needed both before and after RbfA during the maturation of 16S rRNA. It has affinity for free ribosomal 30S subunits but not for 70S ribosomes. This chain is Ribosome maturation factor RimM, found in Coxiella burnetii (strain CbuK_Q154) (Coxiella burnetii (strain Q154)).